The chain runs to 487 residues: V-type proton ATPase subunit B2 (487 aa).

Glycine 2 carries the N-acetylglycine modification.

This sequence belongs to the ATPase alpha/beta chains family. As to quaternary structure, V-ATPase is a heteromultimeric enzyme composed of a peripheral catalytic V1 complex (components A to H) attached to an integral membrane V0 proton pore complex (components: a, c, c'', d and e).

It localises to the vacuole membrane. Its function is as follows. Non-catalytic subunit of the peripheral V1 complex of vacuolar ATPase. V-ATPase is responsible for acidifying a variety of intracellular compartments in eukaryotic cells. The sequence is that of V-type proton ATPase subunit B2 (VHA-B2) from Arabidopsis thaliana (Mouse-ear cress).